A 302-amino-acid polypeptide reads, in one-letter code: tRNA pseudouridine synthase B (302 aa).

The active-site Nucleophile is Asp48.

It belongs to the pseudouridine synthase TruB family. Type 1 subfamily.

It carries out the reaction uridine(55) in tRNA = pseudouridine(55) in tRNA. Functionally, responsible for synthesis of pseudouridine from uracil-55 in the psi GC loop of transfer RNAs. This is tRNA pseudouridine synthase B from Xylella fastidiosa (strain Temecula1 / ATCC 700964).